The following is a 222-amino-acid chain: MTQQNTTLMPREKLLKYGASSLDDKELLAIFLRTGIKNCPVMQLSELVLAHFSSLRGLINADQKHFCQMKGLGITQFVQLQACTEMTKRYLLQELQFAQEFTSPDTVRMYLQTELENKDREIFMVLFLDNQHRLIKKEEMFLGTINQANVYPREIIKTALFCNAAALILAHNHPSGVSTPSMADRKMTENIKQLSELMEIRVLDHFIIGKGNYFSFAEQGWI.

In terms of domain architecture, MPN spans 99-222; the sequence is QEFTSPDTVR…YFSFAEQGWI (124 aa). The Zn(2+) site is built by histidine 171, histidine 173, and aspartate 184. The JAMM motif motif lies at 171-184; sequence HNHPSGVSTPSMAD.

This sequence belongs to the UPF0758 family.

This is UPF0758 protein HSM_0009 from Histophilus somni (strain 2336) (Haemophilus somnus).